The primary structure comprises 147 residues: Cyanate hydratase (147 aa).

Catalysis depends on residues R88, E91, and S114.

This sequence belongs to the cyanase family.

It carries out the reaction cyanate + hydrogencarbonate + 3 H(+) = NH4(+) + 2 CO2. Functionally, catalyzes the reaction of cyanate with bicarbonate to produce ammonia and carbon dioxide. This Parasynechococcus marenigrum (strain WH8102) protein is Cyanate hydratase.